Here is a 38-residue protein sequence, read N- to C-terminus: Cytochrome b6-f complex subunit 5 (38 aa).

A helical transmembrane segment spans residues 5 to 25 (LLLGIVLGLIPVTLAGLFVAA).

It belongs to the PetG family. The 4 large subunits of the cytochrome b6-f complex are cytochrome b6, subunit IV (17 kDa polypeptide, PetD), cytochrome f and the Rieske protein, while the 4 small subunits are PetG, PetL, PetM and PetN. The complex functions as a dimer.

It localises to the cellular thylakoid membrane. Its function is as follows. Component of the cytochrome b6-f complex, which mediates electron transfer between photosystem II (PSII) and photosystem I (PSI), cyclic electron flow around PSI, and state transitions. PetG is required for either the stability or assembly of the cytochrome b6-f complex. This chain is Cytochrome b6-f complex subunit 5, found in Picosynechococcus sp. (strain ATCC 27264 / PCC 7002 / PR-6) (Agmenellum quadruplicatum).